The primary structure comprises 570 residues: Urease subunit alpha (570 aa).

The region spanning 131–570 is the Urease domain; the sequence is GGMDSHIHFI…LPMAQRYFLF (440 aa). Ni(2+) contacts are provided by histidine 136, histidine 138, and lysine 219. Lysine 219 bears the N6-carboxylysine mark. Histidine 221 provides a ligand contact to substrate. Ni(2+) is bound by residues histidine 248 and histidine 274. Histidine 322 (proton donor) is an active-site residue. Aspartate 362 provides a ligand contact to Ni(2+).

It belongs to the metallo-dependent hydrolases superfamily. Urease alpha subunit family. As to quaternary structure, heterotrimer of UreA (gamma), UreB (beta) and UreC (alpha) subunits. Three heterotrimers associate to form the active enzyme. Ni cation is required as a cofactor. In terms of processing, carboxylation allows a single lysine to coordinate two nickel ions.

The protein resides in the cytoplasm. It carries out the reaction urea + 2 H2O + H(+) = hydrogencarbonate + 2 NH4(+). The protein operates within nitrogen metabolism; urea degradation; CO(2) and NH(3) from urea (urease route): step 1/1. The sequence is that of Urease subunit alpha from Allorhizobium ampelinum (strain ATCC BAA-846 / DSM 112012 / S4) (Agrobacterium vitis (strain S4)).